Here is a 372-residue protein sequence, read N- to C-terminus: 4-hydroxy-3-methylbut-2-en-1-yl diphosphate synthase (flavodoxin) (372 aa).

Cysteine 270, cysteine 273, cysteine 305, and glutamate 312 together coordinate [4Fe-4S] cluster.

The protein belongs to the IspG family. Requires [4Fe-4S] cluster as cofactor.

The enzyme catalyses (2E)-4-hydroxy-3-methylbut-2-enyl diphosphate + oxidized [flavodoxin] + H2O + 2 H(+) = 2-C-methyl-D-erythritol 2,4-cyclic diphosphate + reduced [flavodoxin]. It participates in isoprenoid biosynthesis; isopentenyl diphosphate biosynthesis via DXP pathway; isopentenyl diphosphate from 1-deoxy-D-xylulose 5-phosphate: step 5/6. Its function is as follows. Converts 2C-methyl-D-erythritol 2,4-cyclodiphosphate (ME-2,4cPP) into 1-hydroxy-2-methyl-2-(E)-butenyl 4-diphosphate. This is 4-hydroxy-3-methylbut-2-en-1-yl diphosphate synthase (flavodoxin) from Citrobacter koseri (strain ATCC BAA-895 / CDC 4225-83 / SGSC4696).